The following is a 488-amino-acid chain: Alpha,alpha-trehalose-phosphate synthase [UDP-forming] 56 kDa subunit (488 aa).

Residues Y102 and D156 each coordinate D-glucose 6-phosphate. UDP is bound by residues R293 and K298. Residues R293 and K298 each coordinate UDP-alpha-D-glucose. Residue R331 coordinates D-glucose 6-phosphate. UDP-binding positions include I370 and 396–400 (LVSYE). UDP-alpha-D-glucose is bound by residues I370 and 392 to 400 (DGMNLVSYE).

It belongs to the glycosyltransferase 20 family. Trehalose synthase/phosphatase complex contains three or four polypeptides of 56 kDa (TPS1), 102 kDa (TPS2), 115 kDa (TPS3) and 123 kDa (TSL1).

It carries out the reaction D-glucose 6-phosphate + UDP-alpha-D-glucose = alpha,alpha-trehalose 6-phosphate + UDP + H(+). It functions in the pathway carbohydrate biosynthesis. In terms of biological role, synthase catalytic subunit of the trehalose synthase complex that catalyzes the production of trehalose from glucose-6-phosphate and UDP-alpha-D-glucose in a two step process. Can function independently of the complex. In Kluyveromyces lactis (strain ATCC 8585 / CBS 2359 / DSM 70799 / NBRC 1267 / NRRL Y-1140 / WM37) (Yeast), this protein is Alpha,alpha-trehalose-phosphate synthase [UDP-forming] 56 kDa subunit.